The chain runs to 192 residues: RNA-free ribonuclease P (192 aa).

The protein belongs to the HARP family.

The catalysed reaction is Endonucleolytic cleavage of RNA, removing 5'-extranucleotides from tRNA precursor.. RNA-free RNase P that catalyzes the removal of the 5'-leader sequence from pre-tRNA to produce the mature 5'-terminus. This chain is RNA-free ribonuclease P, found in Alkalilimnicola ehrlichii (strain ATCC BAA-1101 / DSM 17681 / MLHE-1).